Consider the following 204-residue polypeptide: Histidine biosynthesis bifunctional protein HisIE (204 aa).

The segment at 1 to 114 (MLTEQQINQL…FAPAASDWSF (114 aa)) is phosphoribosyl-AMP cyclohydrolase. The tract at residues 115 to 204 (LYQLEQLLAS…IGRLRERHEK (90 aa)) is phosphoribosyl-ATP pyrophosphohydrolase.

It in the N-terminal section; belongs to the PRA-CH family. The protein in the C-terminal section; belongs to the PRA-PH family.

It is found in the cytoplasm. It catalyses the reaction 1-(5-phospho-beta-D-ribosyl)-ATP + H2O = 1-(5-phospho-beta-D-ribosyl)-5'-AMP + diphosphate + H(+). The enzyme catalyses 1-(5-phospho-beta-D-ribosyl)-5'-AMP + H2O = 1-(5-phospho-beta-D-ribosyl)-5-[(5-phospho-beta-D-ribosylamino)methylideneamino]imidazole-4-carboxamide. It participates in amino-acid biosynthesis; L-histidine biosynthesis; L-histidine from 5-phospho-alpha-D-ribose 1-diphosphate: step 2/9. The protein operates within amino-acid biosynthesis; L-histidine biosynthesis; L-histidine from 5-phospho-alpha-D-ribose 1-diphosphate: step 3/9. This chain is Histidine biosynthesis bifunctional protein HisIE (hisI), found in Yersinia pestis.